The chain runs to 188 residues: MLPLYVVNNYGQFNHLILRALRDLDIDAKLIPNTTPVSEVREGCQGIILGGGPDISRAGLSHEYVRLGKPVLGICLGLHVIAQEFGGTVQSGQKGGYGAVEVTITDHDGILQGYPQTMQVWASHADEVVTLPGDFDRLATSSICGNEAIAHKHLPIFGIQWHPEVSHTFEGHRVFENFFSICTGQNKG.

A Glutamine amidotransferase type-1 domain is found at 3–188 (PLYVVNNYGQ…FSICTGQNKG (186 aa)). The Nucleophile role is filled by C75. Active-site residues include H162 and E164.

Heterodimer composed of a glutamine amidotransferase subunit (A) and a GMP-binding subunit (B).

The enzyme catalyses XMP + L-glutamine + ATP + H2O = GMP + L-glutamate + AMP + diphosphate + 2 H(+). It participates in purine metabolism; GMP biosynthesis; GMP from XMP (L-Gln route): step 1/1. Catalyzes the synthesis of GMP from XMP. The chain is GMP synthase [glutamine-hydrolyzing] subunit A from Methanospirillum hungatei JF-1 (strain ATCC 27890 / DSM 864 / NBRC 100397 / JF-1).